The sequence spans 267 residues: UDP-glucose:undecaprenyl-phosphate glucose-1-phosphate transferase (267 aa).

Residues 83–103 (VAAALLTALFAPLLLLAALAI) traverse the membrane as a helical segment.

This sequence belongs to the bacterial sugar transferase family.

The protein resides in the cell membrane. The enzyme catalyses di-trans,octa-cis-undecaprenyl phosphate + UDP-alpha-D-glucose = alpha-D-glucosyl di-trans,octa-cis-undecaprenyl diphosphate + UMP. Is likely the initiating enzyme for holdfast polysaccharide synthesis. Catalyzes the transfer of the glucose-1-phosphate moiety from UDP-Glc onto the carrier lipid undecaprenyl phosphate (C55-P), forming a phosphoanhydride bond yielding to glucosyl-pyrophosphoryl-undecaprenol (Glc-PP-C55). Also possesses a weak galactose-1-P transferase activity. The polypeptide is UDP-glucose:undecaprenyl-phosphate glucose-1-phosphate transferase (pssY) (Caulobacter vibrioides (strain ATCC 19089 / CIP 103742 / CB 15) (Caulobacter crescentus)).